Reading from the N-terminus, the 260-residue chain is Serine hydroxymethyltransferase (260 aa).

K60 carries the post-translational modification N6-(pyridoxal phosphate)lysine.

It belongs to the SHMT family. In terms of assembly, homodimer. Pyridoxal 5'-phosphate is required as a cofactor.

The protein localises to the cytoplasm. It carries out the reaction (6R)-5,10-methylene-5,6,7,8-tetrahydrofolate + glycine + H2O = (6S)-5,6,7,8-tetrahydrofolate + L-serine. Its pathway is one-carbon metabolism; tetrahydrofolate interconversion. It functions in the pathway amino-acid biosynthesis; glycine biosynthesis; glycine from L-serine: step 1/1. Catalyzes the reversible interconversion of serine and glycine with tetrahydrofolate (THF) serving as the one-carbon carrier. This reaction serves as the major source of one-carbon groups required for the biosynthesis of purines, thymidylate, methionine, and other important biomolecules. Also exhibits THF-independent aldolase activity toward beta-hydroxyamino acids, producing glycine and aldehydes, via a retro-aldol mechanism. This chain is Serine hydroxymethyltransferase, found in Corynebacterium sp. (strain P-1).